A 326-amino-acid chain; its full sequence is Flap endonuclease 1 (326 aa).

The tract at residues 1–100 (MGNAALRQLA…EEVQERRVAR (100 aa)) is N-domain. Positions 28, 82, 154, 156, 175, 177, and 225 each coordinate Mg(2+). The segment at 118 to 246 (AASRLEARTQ…TAISAINDHG (129 aa)) is I-domain. The interaction with PCNA stretch occupies residues 318–326 (VQTGLDEWI).

It belongs to the XPG/RAD2 endonuclease family. FEN1 subfamily. As to quaternary structure, interacts with PCNA. PCNA stimulates the nuclease activity without altering cleavage specificity. Mg(2+) serves as cofactor.

Its function is as follows. Structure-specific nuclease with 5'-flap endonuclease and 5'-3' exonuclease activities involved in DNA replication and repair. During DNA replication, cleaves the 5'-overhanging flap structure that is generated by displacement synthesis when DNA polymerase encounters the 5'-end of a downstream Okazaki fragment. Binds the unpaired 3'-DNA end and kinks the DNA to facilitate 5' cleavage specificity. Cleaves one nucleotide into the double-stranded DNA from the junction in flap DNA, leaving a nick for ligation. Also involved in the base excision repair (BER) pathway. Acts as a genome stabilization factor that prevents flaps from equilibrating into structures that lead to duplications and deletions. Also possesses 5'-3' exonuclease activity on nicked or gapped double-stranded DNA. In Haloquadratum walsbyi (strain DSM 16790 / HBSQ001), this protein is Flap endonuclease 1.